The primary structure comprises 589 residues: MNVLSGAMRYATPWRTYRRLLSYAREYRWLLVVAACGALLEAVAGSTFLALMKPITNETFIERNREVALWLPLGIVGLFLLRGIAGYITDMAMGRAARSIARDFRVCVLTKYFRLPGSRFDGEPVASMLVRLGSDSEQVAHAVIDAMKVMVQQTLQVIGALVVMLWYSWTVTLAILLVAPLLAWVMQRVAKRYRRISHHIQESNAQLMQAADQALSNYQDVKVYAAQESELERYARLANINLGLAVKVESTRSISSAAVQLLGAVGLAMLLLIAGHEALAGRLSPGDFVSLMTSMIAVIPALKQLTNVQNMLQSGIASAQRLFSVLDSPDELDTGRRPLGRARGLIEFRGITARYPGRSAPVLDSVSFVAAPGTVTAIVGRSGSGKSSLIKLIPRFYEPESGQILLDGHPLQDYLLADLRRQIALVGQQVMLFDGSIADNIAYGEMRQVVSEEIERVVVDANAQDFVNQLPEGLQFQVGVKGGRLSGGQRQRLAIARAMLKDAPILILDEATAALDNESERLVQDALQRLMPERTTLVIAHRLSTIKHADQVLVMDQGRIIESGTHVDLLARDGLYAYLYSMQFRERPT.

Helical transmembrane passes span 29–49 (WLLV…STFL), 68–88 (ALWL…AGYI), 157–177 (VIGA…AILL), 254–274 (ISSA…LLIA), and 283–303 (LSPG…PALK). Residues 32 to 314 (VVAACGALLE…LTNVQNMLQS (283 aa)) form the ABC transmembrane type-1 domain. Positions 346 to 582 (IEFRGITARY…DGLYAYLYSM (237 aa)) constitute an ABC transporter domain. 380-387 (GRSGSGKS) serves as a coordination point for ATP.

It belongs to the ABC transporter superfamily. Lipid exporter (TC 3.A.1.106) family. In terms of assembly, homodimer.

The protein resides in the cell inner membrane. The enzyme catalyses ATP + H2O + lipid A-core oligosaccharideSide 1 = ADP + phosphate + lipid A-core oligosaccharideSide 2.. Its function is as follows. Involved in lipopolysaccharide (LPS) biosynthesis. Translocates lipid A-core from the inner to the outer leaflet of the inner membrane. Transmembrane domains (TMD) form a pore in the inner membrane and the ATP-binding domain (NBD) is responsible for energy generation. The chain is ATP-dependent lipid A-core flippase from Xylella fastidiosa (strain Temecula1 / ATCC 700964).